The following is a 735-amino-acid chain: Zinc finger CCCH domain-containing protein 14 (735 aa).

Met-1 carries the post-translational modification N-acetylmethionine. Residues 78 to 153 (TEPSSLKSPD…RHSYDDGAST (76 aa)) are disordered. Ser-85 bears the Phosphoserine mark. Residues Lys-99, Lys-139, Lys-175, and Lys-198 each participate in a glycyl lysine isopeptide (Lys-Gly) (interchain with G-Cter in SUMO2) cross-link. A compositionally biased stretch (polar residues) spans 131-144 (VSTSSQEQKSTNVR). Ser-240 bears the Phosphoserine mark. Residues Lys-245, Lys-283, and Lys-295 each participate in a glycyl lysine isopeptide (Lys-Gly) (interchain with G-Cter in SUMO2) cross-link. A disordered region spans residues 308–351 (FSHDGEEEEEDEDYGTRIGSLSSSVSVPAKPERRPSLPPSKQAN). Phosphoserine is present on residues Ser-309, Ser-327, and Ser-343. Lys-357 is modified (N6-acetyllysine; alternate). Residue Lys-357 forms a Glycyl lysine isopeptide (Lys-Gly) (interchain with G-Cter in SUMO2); alternate linkage. Residue Lys-378 forms a Glycyl lysine isopeptide (Lys-Gly) (interchain with G-Cter in SUMO2) linkage. 2 positions are modified to phosphoserine: Ser-390 and Ser-409. The disordered stretch occupies residues 399 to 431 (VQGQNRAPRISPPVKEEEAKGDNTGKSQGTQQR). Over residues 412–421 (VKEEEAKGDN) the composition is skewed to basic and acidic residues. A Glycyl lysine isopeptide (Lys-Gly) (interchain with G-Cter in SUMO2) cross-link involves residue Lys-413. Positions 422–431 (TGKSQGTQQR) are enriched in polar residues. Residue Lys-489 forms a Glycyl lysine isopeptide (Lys-Gly) (interchain with G-Cter in SUMO2) linkage. Phosphoserine occurs at positions 498, 515, 527, and 620. 5 consecutive C3H1-type zinc fingers follow at residues 595–620 (EKLLERCKYWPACKNGDECVYHHPIS), 621–640 (PCKAFPNCKFAEKCLFVHPN), 641–656 (CKYDTKCTKADCPFTH), 681–698 (CRYFPACKKMECPFYHPK), and 700–718 (CRFNTQCTRPDCTFYHPTI).

Belongs to the ZC3H14 family. In terms of assembly, homodimer; facilitating circular RNAs (circRNAs) formation. Associates with the spliceosome. Interacts with HOOK2. Interacts with ZFC3H1 in a RNase-sensitive manner. In terms of tissue distribution, expressed in hippocampal pyramidal neurons (at protein level). Expressed in kidney, liver, muscle, heart brain and testes. Expressed in hippocampal pyramidal neurons.

It is found in the nucleus speckle. Functionally, RNA-binding protein involved in the biogenesis of circular RNAs (circRNAs), which are produced by back-splicing circularization of pre-mRNAs. Acts by binding to both exon-intron boundary and 3'-UTR of pre-mRNAs to promote circRNA biogenesis through dimerization and the association with the spliceosome. Required for spermatogenesis via involvement in circRNA biogenesis. Regulates the pre-mRNA processing of ATP5MC1; preventing its degradation. Also binds the poly(A) tail of mRNAs; controlling poly(A) length in neuronal cells. The protein is Zinc finger CCCH domain-containing protein 14 of Mus musculus (Mouse).